The chain runs to 441 residues: MAKDGFDLVIGLGVTGRSVIRYLTDQGMPVRAIDTRAEPVGLDALCADFPDLKVHTGGFKKGWMGKARRLIVSPGVAVSTPAIAEQVVDGKEVIGDIELFARAASEPLVAITGSNAKSTVTTLLGQVADACGMNPGIGGNLGVPALELLDDQARLYVLELSSFQLETTYSLSAEVATVLNVSQDHLDRYASFADYLAAKQRVYDGCQVAVWNRDDLATRPPATVARQISFGAHPEADYRLDSENGQLLCRGEPLLSLSELALTGHHNAMNILSVLAISDALSLNRDKALATVKTFTGLPHRCQLVAESGGVRWFNDSKATNVGATLAALTGIGESIEGKVILVAGGLGKGQDFSPLAEPARQYLRAALLMGEDRTTVAQGMSAAPCELVADMAVAVRRAHALAQPGDAVLLSPACASFDQYSGFAARGDDFTTRAQELCHD.

Residue 113–119 participates in ATP binding; the sequence is GSNAKST.

This sequence belongs to the MurCDEF family.

The protein resides in the cytoplasm. It catalyses the reaction UDP-N-acetyl-alpha-D-muramoyl-L-alanine + D-glutamate + ATP = UDP-N-acetyl-alpha-D-muramoyl-L-alanyl-D-glutamate + ADP + phosphate + H(+). The protein operates within cell wall biogenesis; peptidoglycan biosynthesis. Its function is as follows. Cell wall formation. Catalyzes the addition of glutamate to the nucleotide precursor UDP-N-acetylmuramoyl-L-alanine (UMA). This Alcanivorax borkumensis (strain ATCC 700651 / DSM 11573 / NCIMB 13689 / SK2) protein is UDP-N-acetylmuramoylalanine--D-glutamate ligase.